The primary structure comprises 147 residues: Hemoglobin subunit rho (147 aa).

The region spanning 3 to 147 (HWSAEEKQLI…VAHALAYKYH (145 aa)) is the Globin domain. The heme b site is built by H64 and H93.

This sequence belongs to the globin family.

Functionally, the rho chain is the major early embryonic beta-type hemoglobin chain. In Gallus gallus (Chicken), this protein is Hemoglobin subunit rho.